The primary structure comprises 226 residues: Probable proteasome subunit beta type-1 (226 aa).

Positions 1–24 (MATTVKDTMNVDINAIKKGEIRMG) are cleaved as a propeptide — removed in mature form. T25 (nucleophile) is an active-site residue.

The protein belongs to the peptidase T1B family. The 26S proteasome consists of a 20S proteasome core and two 19S regulatory subunits. The 20S proteasome core is composed of 28 subunits that are arranged in four stacked rings, resulting in a barrel-shaped structure. The two end rings are each formed by seven alpha subunits, and the two central rings are each formed by seven beta subunits. The catalytic chamber with the active sites is on the inside of the barrel.

Its subcellular location is the cytoplasm. The protein localises to the nucleus. It catalyses the reaction Cleavage of peptide bonds with very broad specificity.. Functionally, the proteasome is a multicatalytic proteinase complex which is characterized by its ability to cleave peptides with Arg, Phe, Tyr, Leu, and Glu adjacent to the leaving group at neutral or slightly basic pH. The proteasome has an ATP-dependent proteolytic activity. This chain is Probable proteasome subunit beta type-1 (pre3), found in Schizosaccharomyces pombe (strain 972 / ATCC 24843) (Fission yeast).